Reading from the N-terminus, the 2302-residue chain is Phosphatidylinositol phosphatase PTPRQ (2302 aa).

Positions 1–18 (MMDFHFSFLFLLIGTSES) are cleaved as a signal peptide. Residues 19–1908 (QVDVSSSFDG…GEGLSERTVE (1890 aa)) are Extracellular-facing. N54 is a glycosylation site (N-linked (GlcNAc...) asparagine). Fibronectin type-III domains follow at residues 60 to 155 (PPVF…TAES), 159 to 254 (KVVN…SSST), 310 to 398 (PPQN…PPDV), 401 to 501 (AVFD…PHND), 474 to 566 (GFYE…TVRT), 570 to 665 (VPSS…TPED), 670 to 759 (SPQD…TSET), 764 to 854 (APEN…TEED), 859 to 948 (PPQN…TPEG), 953 to 1053 (PPND…TDQD), 1058 to 1151 (PVGN…TEED), 1156 to 1243 (PPII…TDES), 1248 to 1341 (PPQN…TQES), 1345 to 1431 (AVRN…LPET), 1435 to 1539 (APTN…TLPG), 1544 to 1642 (PPEN…TLES), and 1647 to 1748 (PPNN…IKAP). N162, N169, N318, N354, and N389 each carry an N-linked (GlcNAc...) asparagine glycan. 2 N-linked (GlcNAc...) asparagine glycosylation sites follow: N733 and N746. 4 N-linked (GlcNAc...) asparagine glycosylation sites follow: N904, N998, N1010, and N1040. 2 N-linked (GlcNAc...) asparagine glycosylation sites follow: N1251 and N1256. N1805 carries an N-linked (GlcNAc...) asparagine glycan. A helical membrane pass occupies residues 1909–1929 (IILSVTLCILSIILLGTAIFA). Topologically, residues 1930–2302 (FVRIRQKQKE…VELEWEETTM (373 aa)) are cytoplasmic. One can recognise a Tyrosine-protein phosphatase domain in the interval 2006–2262 (FQEEFSELPK…IFLHQCILDL (257 aa)). The active-site Phosphocysteine intermediate is C2203.

Belongs to the protein-tyrosine phosphatase family. Receptor class 2A subfamily. As to quaternary structure, interacts with TPRN. TPRN, CLIC5 and PTPQR form concentric rings at the base of stereocilia and may form a complex.

The protein resides in the cell projection. It localises to the stereocilium. Its subcellular location is the apical cell membrane. The protein localises to the basal cell membrane. It carries out the reaction a 1,2-diacyl-sn-glycero-3-phospho-(1D-myo-inositol-3,4,5-trisphosphate) + H2O = a 1,2-diacyl-sn-glycero-3-phospho-(1D-myo-inositol-4,5-bisphosphate) + phosphate. It catalyses the reaction a 1,2-diacyl-sn-glycero-3-phospho-(1D-myo-inositol-3,4,5-trisphosphate) + H2O = a 1,2-diacyl-sn-glycero-3-phospho-(1D-myo-inositol-3,4-bisphosphate) + phosphate. The catalysed reaction is a 1,2-diacyl-sn-glycero-3-phospho-(1D-myo-inositol-3,5-bisphosphate) + H2O = a 1,2-diacyl-sn-glycero-3-phospho-(1D-myo-inositol-5-phosphate) + phosphate. The enzyme catalyses a 1,2-diacyl-sn-glycero-3-phospho-(1D-myo-inositol-3,5-bisphosphate) + H2O = a 1,2-diacyl-sn-glycero-3-phospho-(1D-myo-inositol-3-phosphate) + phosphate. It carries out the reaction a 1,2-diacyl-sn-glycero-3-phospho-(1D-myo-inositol-4,5-bisphosphate) + H2O = a 1,2-diacyl-sn-glycero-3-phospho-(1D-myo-inositol 4-phosphate) + phosphate. Its function is as follows. Dephosphorylates phosphatidylinositol phosphates, such as phosphatidylinositol 3,4,5-trisphosphate (PIP3) and phosphatidylinositol 3,5-diphosphates, with preference for PIP3. Phosphate can be hydrolyzed from the D3 and D5 positions in the inositol ring. Has low tyrosine-protein phosphatase activity in vitro; however, the relevance of such activity in vivo is unclear. Plays an important role in adipogenesis of mesenchymal stem cells (MSCs). Regulates the phosphorylation state of AKT1 by regulating the levels of PIP3 level in MSCs and preadipocyte cells. Required for hair bundle maturation, a process that enables hair cells to detect and transmit sound and balance signals effectively, therefore affecting auditory function. May act by regulating the level of phosphatidylinositol 4,5-bisphosphate (PIP2) level in the basal region of hair bundles. This is Phosphatidylinositol phosphatase PTPRQ (Ptprq) from Rattus norvegicus (Rat).